We begin with the raw amino-acid sequence, 331 residues long: UPF0324 membrane protein SERP0111 (331 aa).

The next 10 helical transmembrane spans lie at A7–L26, I31–Y48, L69–G88, L93–I115, S122–L144, S154–F176, Y183–G205, I249–L271, I275–L297, and F308–F330.

This sequence belongs to the UPF0324 family.

It localises to the cell membrane. The polypeptide is UPF0324 membrane protein SERP0111 (Staphylococcus epidermidis (strain ATCC 35984 / DSM 28319 / BCRC 17069 / CCUG 31568 / BM 3577 / RP62A)).